The chain runs to 449 residues: Heterogeneous nuclear ribonucleoprotein H2 (449 aa).

Residue Met-1 is modified to N-acetylmethionine. Met-2 carries the post-translational modification N-acetylmethionine; in Heterogeneous nuclear ribonucleoprotein H2, N-terminally processed. The region spanning 11–90 (FVVKVRGLPW…RYVEVFKSNS (80 aa)) is the RRM 1 domain. Residue Ser-23 is modified to Phosphoserine. Lys-35 participates in a covalent cross-link: Glycyl lysine isopeptide (Lys-Gly) (interchain with G-Cter in SUMO2). Phosphoserine occurs at positions 54 and 63. Residue Lys-87 forms a Glycyl lysine isopeptide (Lys-Gly) (interchain with G-Cter in SUMO2) linkage. Residue Ser-90 is modified to Phosphoserine. Lys-98 participates in a covalent cross-link: Glycyl lysine isopeptide (Lys-Gly) (interchain with G-Cter in SUMO2). The RRM 2 domain maps to 111-188 (GFVRLRGLPF…RYIEIFKSSR (78 aa)). Arg-233 bears the Dimethylated arginine; alternate mark. Arg-233 carries the post-translational modification Omega-N-methylarginine; alternate. The stretch at 234 to 249 (GAYGGGYGGYDDYGGY) is one 1-1 repeat. Residues 234 to 433 (GAYGGGYGGY…YGGQSSMSGY (200 aa)) are 2 X 16 AA Gly-rich approximate repeats. Tyr-246 bears the Phosphotyrosine mark. Residues 289–364 (HCVHMRGLPY…RYVELFLNST (76 aa)) enclose the RRM 3 domain. Ser-310 is subject to Phosphoserine. A run of 3 repeats spans residues 354–372 (HRYV…GGAY), 374–392 (HSYV…GGAY), and 418–433 (GGYG…MSGY). A 2 X 19 AA perfect repeats region spans residues 354 to 392 (HRYVELFLNSTAGTSGGAYDHSYVELFLNSTAGASGGAY).

Component of a ribonucleoprotein complex containing mRNAs and RNA-binding proteins including DDX5, HNRNPH2 and SRSF1 as well as splicing regulator ARVCF. Interacts with TXNL4/DIM1.

It localises to the nucleus. The protein localises to the nucleoplasm. Its function is as follows. This protein is a component of the heterogeneous nuclear ribonucleoprotein (hnRNP) complexes which provide the substrate for the processing events that pre-mRNAs undergo before becoming functional, translatable mRNAs in the cytoplasm. Binds poly(RG). This Mus musculus (Mouse) protein is Heterogeneous nuclear ribonucleoprotein H2 (Hnrnph2).